A 102-amino-acid polypeptide reads, in one-letter code: Small ribosomal subunit protein uS10 (102 aa).

It belongs to the universal ribosomal protein uS10 family. In terms of assembly, part of the 30S ribosomal subunit.

Its function is as follows. Involved in the binding of tRNA to the ribosomes. This chain is Small ribosomal subunit protein uS10, found in Streptococcus pyogenes serotype M12 (strain MGAS2096).